A 469-amino-acid chain; its full sequence is Cell division protein FtsP (469 aa).

Residues methionine 1 to alanine 29 constitute a signal peptide (tat-type signal). The Plastocyanin-like domain maps to isoleucine 228–glutamate 286.

The protein belongs to the FtsP family. In terms of processing, predicted to be exported by the Tat system. The position of the signal peptide cleavage has not been experimentally proven.

The protein resides in the periplasm. Cell division protein that is required for growth during stress conditions. May be involved in protecting or stabilizing the divisomal assembly under conditions of stress. The sequence is that of Cell division protein FtsP from Haemophilus influenzae (strain 86-028NP).